The chain runs to 358 residues: Acetylxylan esterase / glucomannan deacetylase (358 aa).

The N-terminal stretch at methionine 1–alanine 18 is a signal peptide. A lipid anchor (N-palmitoyl cysteine) is attached at cysteine 19. A lipid anchor (S-diacylglycerol cysteine) is attached at cysteine 19. Residue serine 160 is the Nucleophile of the active site. Active-site charge relay system residues include aspartate 333 and histidine 335.

Belongs to the carbohydrate esterase 2 (CE2) family.

The protein localises to the cell membrane. The enzyme catalyses Deacetylation of xylans and xylo-oligosaccharides.. Its pathway is glycan degradation; xylan degradation. Its function is as follows. Involved in the degradation of plant cell wall polysaccharides. Catalyzes the deacetylation of acetylated birchwood xylan and glucomannan, with equal efficiency, and of the synthetic substrate 4-nitrophenyl acetate (4-NPAc). Does not bind cellulose, cellohexaose and beta-glucan. The polypeptide is Acetylxylan esterase / glucomannan deacetylase (Cellvibrio japonicus (strain Ueda107) (Pseudomonas fluorescens subsp. cellulosa)).